The sequence spans 591 residues: Protein NRT1/ PTR FAMILY 1.1 (591 aa).

Transmembrane regions (helical) follow at residues Thr68–Ser88, Ile98–Leu118, Ser139–Ile159, Phe186–Val206, Ile216–Ser236, Leu329–Val349, Ile374–Tyr394, Met418–Tyr438, Ala460–Gly480, Ile496–Leu516, and Tyr543–Trp563.

This sequence belongs to the major facilitator superfamily. Proton-dependent oligopeptide transporter (POT/PTR) (TC 2.A.17) family. As to expression, expressed in siliques, shoots and roots. Mainly detected in larger expanded leaves, in the companion cells of major veins.

It localises to the cell membrane. Its function is as follows. Low-affinity nitrate transporter involved in xylem-to-phloem transfer for redistributing nitrate into developing leaves. Not involved in dipeptides transport. The sequence is that of Protein NRT1/ PTR FAMILY 1.1 (NPF1.1) from Arabidopsis thaliana (Mouse-ear cress).